Reading from the N-terminus, the 77-residue chain is RNA-binding protein Hfq (77 aa).

The Sm domain occupies 10-70; sequence DIFLNSARKN…ITTVTPEKPI (61 aa).

This sequence belongs to the Hfq family. In terms of assembly, homohexamer.

Its function is as follows. RNA chaperone that binds small regulatory RNA (sRNAs) and mRNAs to facilitate mRNA translational regulation in response to envelope stress, environmental stress and changes in metabolite concentrations. Also binds with high specificity to tRNAs. The chain is RNA-binding protein Hfq from Clostridium botulinum (strain Eklund 17B / Type B).